The sequence spans 1364 residues: Pleckstrin homology domain-containing family H member 1 (1364 aa).

Residues F28–A169 are a coiled coil. 5 disordered regions span residues G184–H266, G296–P321, L356–K395, P487–G529, and D546–S568. A compositionally biased stretch (polar residues) spans E237–S246. The span at L364–M379 shows a compositional bias: basic and acidic residues. Positions V509 to L520 are enriched in polar residues. 2 consecutive PH domains span residues S578 to K672 and K687 to G796. A Phosphoserine modification is found at S745. The MyTH4 domain occupies Y832 to L986. The 337-residue stretch at F997 to P1333 folds into the FERM domain.

This chain is Pleckstrin homology domain-containing family H member 1 (PLEKHH1), found in Homo sapiens (Human).